A 425-amino-acid chain; its full sequence is Serine--tRNA ligase (425 aa).

Residue 231-233 (TAE) participates in L-serine binding. 262–264 (RSE) contributes to the ATP binding site. Glu-285 contributes to the L-serine binding site. 349-352 (EISS) is an ATP binding site. Residue Ser-385 participates in L-serine binding.

The protein belongs to the class-II aminoacyl-tRNA synthetase family. Type-1 seryl-tRNA synthetase subfamily. Homodimer. The tRNA molecule binds across the dimer.

It is found in the cytoplasm. It carries out the reaction tRNA(Ser) + L-serine + ATP = L-seryl-tRNA(Ser) + AMP + diphosphate + H(+). The catalysed reaction is tRNA(Sec) + L-serine + ATP = L-seryl-tRNA(Sec) + AMP + diphosphate + H(+). It functions in the pathway aminoacyl-tRNA biosynthesis; selenocysteinyl-tRNA(Sec) biosynthesis; L-seryl-tRNA(Sec) from L-serine and tRNA(Sec): step 1/1. In terms of biological role, catalyzes the attachment of serine to tRNA(Ser). Is also able to aminoacylate tRNA(Sec) with serine, to form the misacylated tRNA L-seryl-tRNA(Sec), which will be further converted into selenocysteinyl-tRNA(Sec). The sequence is that of Serine--tRNA ligase from Bartonella bacilliformis (strain ATCC 35685 / KC583 / Herrer 020/F12,63).